We begin with the raw amino-acid sequence, 385 residues long: Putative transport protein MT1133 (385 aa).

Helical transmembrane passes span 7-27 (LTQK…GAYF), 32-52 (FVLI…FKWF), 66-86 (LLSA…LAIV), 159-179 (SLAG…ALLV), 218-238 (FVIA…AGFH), 241-261 (FFIF…GGIV), 263-283 (IPFG…FVLL), and 319-339 (GITM…ILIV).

It belongs to the autoinducer-2 exporter (AI-2E) (TC 2.A.86) family.

It is found in the cell membrane. This Mycobacterium tuberculosis (strain CDC 1551 / Oshkosh) protein is Putative transport protein MT1133.